A 316-amino-acid chain; its full sequence is Ribosomal RNA small subunit methyltransferase H (316 aa).

S-adenosyl-L-methionine is bound by residues 35–37, Asp-55, Phe-84, Asp-105, and Gln-112; that span reads SGH.

Belongs to the methyltransferase superfamily. RsmH family.

It localises to the cytoplasm. It catalyses the reaction cytidine(1402) in 16S rRNA + S-adenosyl-L-methionine = N(4)-methylcytidine(1402) in 16S rRNA + S-adenosyl-L-homocysteine + H(+). Its function is as follows. Specifically methylates the N4 position of cytidine in position 1402 (C1402) of 16S rRNA. In Streptococcus equi subsp. zooepidemicus (strain MGCS10565), this protein is Ribosomal RNA small subunit methyltransferase H.